Consider the following 830-residue polypeptide: Cadherin-16 (830 aa).

The signal sequence occupies residues 1-21 (MISARPWLLYLSVIQAFTTEA). The Extracellular portion of the chain corresponds to 22-788 (QPAESLHTEV…MKGMPTKLSA (767 aa)). 6 Cadherin domains span residues 27 to 128 (LHTE…VPQF), 133 to 237 (YRAQ…SIVE), 244 to 338 (EPVH…APVC), 343 to 451 (PTVN…APEF), 457 to 566 (GPVT…PLKL), and 571 to 667 (YETS…VPAL). N-linked (GlcNAc...) asparagine glycans are attached at residues Asn-519, Asn-604, and Asn-724. An ectodomain G region spans residues 668 to 788 (TLSAGPSRHL…MKGMPTKLSA (121 aa)). A helical transmembrane segment spans residues 789–809 (VGVLLGTLAAIGFILILVFTH). Residues 810–830 (LALARKDLDQPADSVPLKAAV) are Cytoplasmic-facing. Residue Ser-823 is modified to Phosphoserine.

Kidney specific.

The protein resides in the cell membrane. Functionally, cadherins are calcium-dependent cell adhesion proteins. They preferentially interact with themselves in a homophilic manner in connecting cells; cadherins may thus contribute to the sorting of heterogeneous cell types. This Mus musculus (Mouse) protein is Cadherin-16 (Cdh16).